The sequence spans 138 residues: Unique cartilage matrix-associated protein (138 aa).

The N-terminal stretch at 1–26 is a signal peptide; it reads MKRNQVLFLTCAAAVVFLAVLHVGES. A propeptide spans 28–64 (ucma-N); the sequence is AVRSKDDPAPDKKESLKSKIFMQGSEASNFFKKRGKR. The tract at residues 58–116 is disordered; the sequence is FKKRGKRSPKSQDEINAENRQRLSADERRREYYEEQRNEFENHVEEEQDEQEERSREQI. Over residues 67-102 the composition is skewed to basic and acidic residues; the sequence is KSQDEINAENRQRLSADERRREYYEEQRNEFENHVE. The stretch at 69 to 118 forms a coiled coil; the sequence is QDEINAENRQRLSADERRREYYEEQRNEFENHVEEEQDEQEERSREQIEQ. 4-carboxyglutamate occurs at positions 71, 75, 84, 88, 91, 92, 96, 98, 102, 103, 107, 110, 114, and 117.

This sequence belongs to the UCMA family. Proteolytically cleaved by a furin-like convertase to generate a persistent C-terminal fragment found in almost the entire cartilage matrix, and affecting osteoblast differentiation. Post-translationally, sulfated on tyrosine residues.

The protein localises to the secreted. It localises to the extracellular space. It is found in the extracellular matrix. In terms of biological role, may be involved in the negative control of osteogenic differentiation of osteochondrogenic precursor cells in peripheral zones of fetal cartilage and at the cartilage-bone interface. This Xenopus tropicalis (Western clawed frog) protein is Unique cartilage matrix-associated protein (ucma).